We begin with the raw amino-acid sequence, 213 residues long: Thymidylate kinase (213 aa).

Residue 10–17 (GLEGAGKT) coordinates ATP.

This sequence belongs to the thymidylate kinase family.

It catalyses the reaction dTMP + ATP = dTDP + ADP. In terms of biological role, phosphorylation of dTMP to form dTDP in both de novo and salvage pathways of dTTP synthesis. This chain is Thymidylate kinase, found in Escherichia coli O81 (strain ED1a).